A 248-amino-acid polypeptide reads, in one-letter code: Mannose-binding protein C (248 aa).

A signal peptide spans 1 to 20 (MSLFPSLPLLLLSVVAASYS). In terms of domain architecture, Collagen-like spans 42–99 (GINGFPGKDGRDGTKGEKGEPGQGLRGLQGPPGKLGPPGNPGPSGSPGPKGQKGDPGK). Positions 43–111 (INGFPGKDGR…DCDSSLAASE (69 aa)) are disordered. Pro-47 is subject to 4-hydroxyproline. Residues 49 to 61 (KDGRDGTKGEKGE) show a composition bias toward basic and acidic residues. 4-hydroxyproline occurs at positions 73, 79, 82, and 88. Residues 75–87 (KLGPPGNPGPSGS) show a composition bias toward pro residues. Positions 93-102 (QKGDPGKSPD) are enriched in basic and acidic residues. A coiled-coil region spans residues 112–130 (RKALQTEMARIKKWLTFSL). Residues 134-245 (VGNKFFLTNG…CSSSHLAVCE (112 aa)) form the C-type lectin domain. Cystine bridges form between Cys-155–Cys-244 and Cys-222–Cys-236.

Oligomeric complex of 3 or more homotrimers. Interacts with MASP1 and MASP2. Interacts with MEP1A and MEP1B and may inhibit their catalytic activity. Hydroxylation on proline residues within the sequence motif, GXPG, is most likely to be 4-hydroxy as this fits the requirement for 4-hydroxylation in vertebrates.

The protein resides in the secreted. Functionally, calcium-dependent lectin involved in innate immune defense. Binds mannose, fucose and N-acetylglucosamine on different microorganisms and activates the lectin complement pathway. Binds to late apoptotic cells, as well as to apoptotic blebs and to necrotic cells, but not to early apoptotic cells, facilitating their uptake by macrophages. This chain is Mannose-binding protein C (MBL2), found in Pongo pygmaeus (Bornean orangutan).